The primary structure comprises 190 residues: Cysteine dioxygenase (190 aa).

Fe cation is bound by residues His-78, His-80, and His-132. The 3'-(S-cysteinyl)-tyrosine (Cys-Tyr) cross-link spans 85–149; sequence CFVKILDGEL…SNGAVSLHLY (65 aa).

This sequence belongs to the cysteine dioxygenase family. Requires Fe cation as cofactor. In terms of processing, the thioether cross-link between Cys-85 and Tyr-149 plays a structural role through stabilizing the Fe(2+) ion, and prevents the production of highly damaging free hydroxyl radicals by holding the oxygen radical via hydroxyl hydrogen.

It catalyses the reaction L-cysteine + O2 = 3-sulfino-L-alanine + H(+). The protein operates within organosulfur biosynthesis; taurine biosynthesis; hypotaurine from L-cysteine: step 1/2. The sequence is that of Cysteine dioxygenase (cdo-1) from Caenorhabditis briggsae.